A 119-amino-acid chain; its full sequence is Large ribosomal subunit protein bL20 (119 aa).

The protein belongs to the bacterial ribosomal protein bL20 family.

Its function is as follows. Binds directly to 23S ribosomal RNA and is necessary for the in vitro assembly process of the 50S ribosomal subunit. It is not involved in the protein synthesizing functions of that subunit. This is Large ribosomal subunit protein bL20 (rplT) from Geobacillus stearothermophilus (Bacillus stearothermophilus).